Here is a 518-residue protein sequence, read N- to C-terminus: Golgi-associated olfactory signaling regulator (518 aa).

An N-terminal signal peptide occupies residues Met1–Ser19. At Lys20–Ala409 the chain is on the extracellular side. The segment at His38 to Ser377 is disordered. Residues Asp92–Lys106 show a composition bias toward basic and acidic residues. Asn124 carries N-linked (GlcNAc...) asparagine glycosylation. Pro residues predominate over residues Thr138–Pro153. Asn156 is a glycosylation site (N-linked (GlcNAc...) asparagine). Polar residues-rich tracts occupy residues Thr168 to Glu180 and Leu187 to Lys207. Asn188 and Asn220 each carry an N-linked (GlcNAc...) asparagine glycan. Basic and acidic residues-rich tracts occupy residues Pro209–Asn220 and Asp236–Val247. Polar residues-rich tracts occupy residues Thr248–Thr270 and Ser276–Tyr285. An N-linked (GlcNAc...) asparagine glycan is attached at Asn268. A helical transmembrane segment spans residues Leu410–Leu430. Residues Tyr431–Val518 are Cytoplasmic-facing. Residues His477–Val518 are disordered. Positions Gln482 to Gly499 are enriched in pro residues.

It is found in the golgi apparatus membrane. Its function is as follows. Required for proper function of the olfactory system. May be involved in establishing the acuity of olfactory sensory signaling. This Homo sapiens (Human) protein is Golgi-associated olfactory signaling regulator (GFY).